We begin with the raw amino-acid sequence, 464 residues long: Sulfoacetaldehyde dehydrogenase (acylating) (464 aa).

Catalysis depends on Cys241, which acts as the Nucleophile.

It belongs to the aldehyde dehydrogenase family.

It catalyses the reaction sulfoacetaldehyde + NADP(+) + CoA = sulfoacetyl-CoA + NADPH + H(+). Involved in the degradation of sulfoacetate. Catalyzes the conversion of sulfoacetyl-CoA and NADPH to sulfoacetaldehyde, CoA and NADP(+). A much lower level of activity (1%) is observed when NADP(+) is replaced with NAD(+). The sequence is that of Sulfoacetaldehyde dehydrogenase (acylating) from Bilophila wadsworthia (strain 3_1_6).